The sequence spans 542 residues: Putative leucine aminopeptidase 1 (542 aa).

Residues Lys294 and Asp299 each contribute to the Mn(2+) site. The active site involves Lys323. Asp336, Asp396, and Glu398 together coordinate Mn(2+). Arg400 is a catalytic residue.

It belongs to the peptidase M17 family. Homohexamer (dimer of homotrimers). Mn(2+) is required as a cofactor.

It is found in the cytoplasm. The enzyme catalyses Release of an N-terminal amino acid, Xaa-|-Yaa-, in which Xaa is preferably Leu, but may be other amino acids including Pro although not Arg or Lys, and Yaa may be Pro. Amino acid amides and methyl esters are also readily hydrolyzed, but rates on arylamides are exceedingly low.. It catalyses the reaction Release of N-terminal proline from a peptide.. Functionally, presumably involved in the processing and regular turnover of intracellular proteins. Catalyzes the removal of unsubstituted N-terminal amino acids from various peptides. The polypeptide is Putative leucine aminopeptidase 1 (Oryza sativa subsp. japonica (Rice)).